A 270-amino-acid polypeptide reads, in one-letter code: Formamidopyrimidine-DNA glycosylase (270 aa).

The active-site Schiff-base intermediate with DNA is the Pro2. The active-site Proton donor is the Glu3. The active-site Proton donor; for beta-elimination activity is Lys58. Residues His91, Arg110, and Arg151 each contribute to the DNA site. An FPG-type zinc finger spans residues Phe236 to Ser270. Arg260 (proton donor; for delta-elimination activity) is an active-site residue.

This sequence belongs to the FPG family. In terms of assembly, monomer. Requires Zn(2+) as cofactor.

The enzyme catalyses Hydrolysis of DNA containing ring-opened 7-methylguanine residues, releasing 2,6-diamino-4-hydroxy-5-(N-methyl)formamidopyrimidine.. It carries out the reaction 2'-deoxyribonucleotide-(2'-deoxyribose 5'-phosphate)-2'-deoxyribonucleotide-DNA = a 3'-end 2'-deoxyribonucleotide-(2,3-dehydro-2,3-deoxyribose 5'-phosphate)-DNA + a 5'-end 5'-phospho-2'-deoxyribonucleoside-DNA + H(+). Involved in base excision repair of DNA damaged by oxidation or by mutagenic agents. Acts as a DNA glycosylase that recognizes and removes damaged bases. Has a preference for oxidized purines, such as 7,8-dihydro-8-oxoguanine (8-oxoG). Has AP (apurinic/apyrimidinic) lyase activity and introduces nicks in the DNA strand. Cleaves the DNA backbone by beta-delta elimination to generate a single-strand break at the site of the removed base with both 3'- and 5'-phosphates. The sequence is that of Formamidopyrimidine-DNA glycosylase from Pseudomonas fluorescens (strain ATCC BAA-477 / NRRL B-23932 / Pf-5).